The chain runs to 436 residues: Methylenetetrahydrofolate--tRNA-(uracil-5-)-methyltransferase TrmFO (436 aa).

Residue 8–13 (GAGLAG) coordinates FAD.

Belongs to the MnmG family. TrmFO subfamily. Requires FAD as cofactor.

Its subcellular location is the cytoplasm. It catalyses the reaction uridine(54) in tRNA + (6R)-5,10-methylene-5,6,7,8-tetrahydrofolate + NADH + H(+) = 5-methyluridine(54) in tRNA + (6S)-5,6,7,8-tetrahydrofolate + NAD(+). The catalysed reaction is uridine(54) in tRNA + (6R)-5,10-methylene-5,6,7,8-tetrahydrofolate + NADPH + H(+) = 5-methyluridine(54) in tRNA + (6S)-5,6,7,8-tetrahydrofolate + NADP(+). Its function is as follows. Catalyzes the folate-dependent formation of 5-methyl-uridine at position 54 (M-5-U54) in all tRNAs. The polypeptide is Methylenetetrahydrofolate--tRNA-(uracil-5-)-methyltransferase TrmFO (Persephonella marina (strain DSM 14350 / EX-H1)).